A 349-amino-acid polypeptide reads, in one-letter code: 4-hydroxythreonine-4-phosphate dehydrogenase (349 aa).

Threonine 135 serves as a coordination point for substrate. Residues histidine 170, histidine 215, and histidine 276 each coordinate a divalent metal cation. The substrate site is built by lysine 284, asparagine 293, and arginine 302.

The protein belongs to the PdxA family. Homodimer. A divalent metal cation serves as cofactor.

It localises to the cytoplasm. It carries out the reaction 4-(phosphooxy)-L-threonine + NAD(+) = 3-amino-2-oxopropyl phosphate + CO2 + NADH. It functions in the pathway cofactor biosynthesis; pyridoxine 5'-phosphate biosynthesis; pyridoxine 5'-phosphate from D-erythrose 4-phosphate: step 4/5. In terms of biological role, catalyzes the NAD(P)-dependent oxidation of 4-(phosphooxy)-L-threonine (HTP) into 2-amino-3-oxo-4-(phosphooxy)butyric acid which spontaneously decarboxylates to form 3-amino-2-oxopropyl phosphate (AHAP). The sequence is that of 4-hydroxythreonine-4-phosphate dehydrogenase from Synechococcus sp. (strain JA-3-3Ab) (Cyanobacteria bacterium Yellowstone A-Prime).